Here is a 475-residue protein sequence, read N- to C-terminus: Peripherin (475 aa).

Residues 1-42 (MPSSASMSHHHSSGLRSSISSTSYRRTFGPPPSLSPGAFSYS) form a disordered region. The segment at 1 to 103 (MPSSASMSHH…FLATRSNEKQ (103 aa)) is head. Over residues 14–26 (GLRSSISSTSYRR) the composition is skewed to low complexity. A 3'-nitrotyrosine modification is found at Tyr-24. Ser-35 and Ser-57 each carry phosphoserine. Ser-66 carries the phosphoserine; by PKB/AKT1 modification. Residues 101–411 (EKQELQELND…KLLEGEESRI (311 aa)) form the IF rod domain. Residues 104 to 136 (ELQELNDRFANFIEKVRFLEQQNAALRGELSQA) are coil 1A. The linker 1 stretch occupies residues 137-147 (RGQEPARADQL). The coil 1B stretch occupies residues 148 to 243 (CQQELRELRR…KLHEEELRDL (96 aa)). Positions 244–266 (QVSVESQQVQQVEVEATVKPELT) are linker 2. The tract at residues 267 to 409 (AALRDIRAQY…YRKLLEGEES (143 aa)) is coil 2. Tyr-383 is subject to 3'-nitrotyrosine. The segment at 410 to 475 (RISVPVHSFA…DLDKSSIHSY (66 aa)) is tail. The segment at 453–475 (EKVVTESQKEQHSDLDKSSIHSY) is disordered. Tyr-475 bears the Phosphotyrosine mark.

Belongs to the intermediate filament family. In terms of assembly, forms homodimers (in vitro). Homopolymerizes into a filamentous network (in vitro). Forms heterodimers with NEFL, NEFM or NEFH (in vitro). Interacts with DST (via C-terminus). Interacts with RAB7A; the interaction is direct. Interacts with PRKCE (via phorbol-ester/DAG-type 2 domain). In terms of processing, phosphorylated; phosphorylation increases after nerve injury in regenerating neurons. Expressed in the sciatic nerve and at very low levels in the central nervous system (at protein level). Expressed in the spinal cord, in the sciatic nerve at the level of the dorsal root ganglion and in trigeminal nerves (at protein level). Expressed in the cranial nerves in the hindbrain, including the sensory and motor trigeminal neurons, the mesencephalic trigeminal neurons, the spinal trigeminal neurons, and in the facial nerve (at protein level). Expressed in the cerebellum, with expression in the inferior cerebellar peduncle and the lateral deep cerebellar nucleus (at protein level). Expressed in vestibulocochlear neurons, such as the anteroventral cochlear nucleus, the dorsal cochlear nucleus, the superficial granule cell layer and the granule cell lamina (at protein level). Expressed in glossopharyngeal, vagal and hypoglossal neurons (at protein level). Expressed in peripheral sensory neurons, in the dorsal root ganglia and the spinal cord, and to a lower extent in motor neurons. Expressed in the optic tract of the central nervous system, especially in the lateral geniculate nucleus and the superior colliculus. Expressed in neurons of the pineal stalk in the cortex. Expressed in the spinal trigeminal tract of the midbrain, in the medulla and in the medial cerebellar peduncle.

It is found in the cytoplasm. Its subcellular location is the cytoskeleton. The protein localises to the cell projection. The protein resides in the axon. It localises to the perikaryon. Functionally, class-III neuronal intermediate filament protein. May form an independent structural network without the involvement of other neurofilaments or may cooperate with the neuronal intermediate filament proteins NEFL, NEFH, NEFM and INA to form filamentous networks. Assembly of the neuronal intermediate filaments may be regulated by RAB7A. Plays a role in the development of unmyelinated sensory neurons. May be involved in axon elongation and axon regeneration after injury. Inhibits neurite extension in type II spiral ganglion neurons in the cochlea. The chain is Peripherin (Prph) from Mus musculus (Mouse).